Consider the following 518-residue polypeptide: Kelch repeat and BTB domain-containing protein 4 (518 aa).

One can recognise a BTB domain in the interval 45 to 112 (ADVTISVEGR…IYHGTVKLRA (68 aa)). Residues 147-239 (CLQVMWLADR…SLKEIGENVH (93 aa)) form the BACK domain. 5 Kelch repeats span residues 239–285 (HIYL…KHGG), 286–328 (DLYV…SVPG), 331–378 (AIYS…NLNG), 380–430 (IYLL…VHKD), and 432–481 (VFIV…VFRD).

As to quaternary structure, component of the BCR(KBTBD4) E3 ubiquitin ligase complex, at least composed of CUL3, KBTBD4 and RBX1.

Substrate-specific adapter of a BCR (BTB-CUL3-RBX1) E3 ubiquitin ligase complex which targets CoREST corepressor complex components RCOR1, KDM1A/LSD1 and HDAC2 for proteasomal degradation. RCOR1 is likely to be the primary target while degradation of KDM1A and HDAC2 is likely due to their association with RCOR1. Also targets RCOR3, MIER2 and MIER3 for proteasomal degradation as well as associated proteins ZNF217 and RREB1. Degradation is dependent on the presence of an ELM2 domain in the target proteins. In Pongo abelii (Sumatran orangutan), this protein is Kelch repeat and BTB domain-containing protein 4 (KBTBD4).